We begin with the raw amino-acid sequence, 425 residues long: MEIVKIIGREILDSRGNPTVEVDVHLACGIIGRAAVPSGASTGENEAIELRDQDKARYCGKGVLKAVKNVNEVIDPALCGMSVLEQTAIDRKLIELDGTKTKSNLGANAMLGVSLAVAKAAAAYLDIPLYRYIGGSNTYVLPVPMMNIINGGSHSDAPIAFQEFMIRPVGACCFREGLRMGAEVFHALKKVLHDRGLSTAVGDEGGFAPALNGTEDAIESILKAVEAAGYVPGKDITIAMDCASSEFFKDGIYDYTKFEGEKGKKRSIDEQVAYLTELVGKYPIDSIEDGMSENDWEGWKKLTVALGDKVQLVGDDLFVTNVEFLRRGIAEKCGNSILIKVNQIGTLTETLNAIEMAHRHGFTSVTSHRSGETEDTTIADIAVATNSGQIKTGSLSRTDRMAKYNQLLRIEEELGPCAVYGYKKV.

(2R)-2-phosphoglycerate is bound at residue glutamine 162. Catalysis depends on glutamate 204, which acts as the Proton donor. The Mg(2+) site is built by aspartate 241, glutamate 288, and aspartate 315. Positions 340, 369, 370, and 391 each coordinate (2R)-2-phosphoglycerate. Lysine 340 (proton acceptor) is an active-site residue.

Belongs to the enolase family. Mg(2+) serves as cofactor.

It is found in the cytoplasm. The protein resides in the secreted. Its subcellular location is the cell surface. The enzyme catalyses (2R)-2-phosphoglycerate = phosphoenolpyruvate + H2O. It functions in the pathway carbohydrate degradation; glycolysis; pyruvate from D-glyceraldehyde 3-phosphate: step 4/5. In terms of biological role, catalyzes the reversible conversion of 2-phosphoglycerate (2-PG) into phosphoenolpyruvate (PEP). It is essential for the degradation of carbohydrates via glycolysis. This is Enolase from Porphyromonas gingivalis (strain ATCC 33277 / DSM 20709 / CIP 103683 / JCM 12257 / NCTC 11834 / 2561).